Reading from the N-terminus, the 384-residue chain is S-adenosylmethionine synthase (384 aa).

His15 contributes to the ATP binding site. Asp17 is a binding site for Mg(2+). Residue Glu43 coordinates K(+). L-methionine-binding residues include Glu56 and Gln99. A flexible loop region spans residues 99–109 (QSPDINQGVDR). ATP is bound by residues 164–166 (DAK), 230–231 (RF), Asp239, 245–246 (RK), Ala262, and Lys266. An L-methionine-binding site is contributed by Asp239. Lys270 is an L-methionine binding site.

This sequence belongs to the AdoMet synthase family. Homotetramer; dimer of dimers. The cofactor is Mg(2+). It depends on K(+) as a cofactor.

The protein resides in the cytoplasm. The enzyme catalyses L-methionine + ATP + H2O = S-adenosyl-L-methionine + phosphate + diphosphate. Its pathway is amino-acid biosynthesis; S-adenosyl-L-methionine biosynthesis; S-adenosyl-L-methionine from L-methionine: step 1/1. In terms of biological role, catalyzes the formation of S-adenosylmethionine (AdoMet) from methionine and ATP. The overall synthetic reaction is composed of two sequential steps, AdoMet formation and the subsequent tripolyphosphate hydrolysis which occurs prior to release of AdoMet from the enzyme. This is S-adenosylmethionine synthase from Yersinia pseudotuberculosis serotype IB (strain PB1/+).